A 730-amino-acid polypeptide reads, in one-letter code: MEEIQSQSDLYRSSSSSASSPTSRVPSSHFFYVRKPGSLRQPISFEDSPEWEDTPDVDLRMEDEAGGGDSINDATTTPVSPSLSKMNSGSMASPPVPEGGAGTGVVRKIAGASIAWKDLTVTMKGKRKYSDKVVKSSNGYAFPGTMTVIMGPAKSGKSTLLRALAGRLPPSAKMYGEVFVNGSKSHMPYGSYGFVERETQLIGSLTVREFLYYSALLQLPGFLFQKRSVVEDAIQAMSLSDYANKLIGGHCYMKGLRSGERRRVSIARELVMRPHILFIDEPLYHLDSVSALLMMVTLKKLASMGCTLVFTIYQSSTEVFGLFDRICLLSNGNTLFFGETLACLQHFSNAGFPCPIMQSPSDHFLRAINTDFDRIIAMCKNWQDDNGDFSAVNMDTAVAIRTLEATYKSSADADSVEAMIIKLTEREGTQLKSKGKAGAATRVAVLTWRSLLVMSREWKYYWLRLILYMILTLSIGTLYSGLGHSLSSVATRVAAVFVFVSFASLLGIAGIPSLLKEIKIYRSEASNQHSGAFVFLLGQFLGSIPFLFLMSISSSLVFYFMVGLRDDFSLLMYFVLNFFMCLLVNEGLMLFIACIWRDVYWSTLTLISVHVIMMLAAGHFRIRTALPKPVWTYPFAYISFHTYSIEGLLENEYLGEVFAVGEVRSISGYQAIQGNYQISPDTNAKWRNMLVLLAMAFGYRLLVYVLLRFGLNKNVSGRLLLSHKKNNSSR.

Residues 1–28 show a composition bias toward low complexity; that stretch reads MEEIQSQSDLYRSSSSSASSPTSRVPSS. Residues 1 to 100 are disordered; sequence MEEIQSQSDL…MASPPVPEGG (100 aa). Over residues 47–56 the composition is skewed to acidic residues; sequence DSPEWEDTPD. Residues 72 to 91 are compositionally biased toward polar residues; sequence NDATTTPVSPSLSKMNSGSM. Position 93 is a phosphoserine (Ser93). In terms of domain architecture, ABC transporter spans 114 to 356; it reads IAWKDLTVTM…FSNAGFPCPI (243 aa). Residue 151–158 participates in ATP binding; it reads GPAKSGKS. An ABC transmembrane type-2 domain is found at 441-653; that stretch reads TRVAVLTWRS…SIEGLLENEY (213 aa). 6 consecutive transmembrane segments (helical) span residues 465–485, 495–515, 532–552, 575–595, 600–620, and 689–709; these read LILYMILTLSIGTLYSGLGHS, AVFVFVSFASLLGIAGIPSLL, AFVFLLGQFLGSIPFLFLMSI, VLNFFMCLLVNEGLMLFIACI, YWSTLTLISVHVIMMLAAGHF, and MLVLLAMAFGYRLLVYVLLRF.

Belongs to the ABC transporter superfamily. ABCG family. Eye pigment precursor importer (TC 3.A.1.204) subfamily.

The protein localises to the membrane. In Arabidopsis thaliana (Mouse-ear cress), this protein is ABC transporter G family member 3 (ABCG3).